Consider the following 425-residue polypeptide: Raffinose permease (425 aa).

At methionine 1–aspartate 11 the chain is on the cytoplasmic side. A helical membrane pass occupies residues phenylalanine 12–phenylalanine 32. The Periplasmic segment spans residues leucine 33–threonine 48. A helical membrane pass occupies residues glycine 49 to isoleucine 69. At serine 70–asparagine 78 the chain is on the cytoplasmic side. The helical transmembrane segment at leucine 79–alanine 99 threads the bilayer. The Periplasmic portion of the chain corresponds to proline 100–asparagine 105. The helical transmembrane segment at isoleucine 106 to glycine 126 threads the bilayer. Over alanine 127–arginine 147 the chain is Cytoplasmic. A helical transmembrane segment spans residues methionine 148 to aspartate 168. A topological domain (periplasmic) is located at residue proline 169. The chain crosses the membrane as a helical span at residues serine 170–alanine 190. The Cytoplasmic segment spans residues arginine 191–valine 229. The helical transmembrane segment at leucine 230 to phenylalanine 250 threads the bilayer. Topologically, residues arginine 251 to glycine 265 are periplasmic. The helical transmembrane segment at phenylalanine 266–isoleucine 286 threads the bilayer. The Cytoplasmic portion of the chain corresponds to asparagine 287 to threonine 294. Residues leucine 295–methionine 315 traverse the membrane as a helical segment. Threonine 316 is a topological domain (periplasmic). The chain crosses the membrane as a helical span at residues glutamate 317–phenylalanine 337. Residues lysine 338–threonine 351 are Cytoplasmic-facing. A helical transmembrane segment spans residues valine 352–alanine 372. At glycine 373–asparagine 383 the chain is on the periplasmic side. The chain crosses the membrane as a helical span at residues threonine 384–serine 404. The Cytoplasmic segment spans residues serine 405–asparagine 425.

The protein belongs to the major facilitator superfamily. Oligosaccharide:H(+) symporter (OHS) (TC 2.A.1.5) family. Monomer.

The protein resides in the cell inner membrane. In terms of biological role, responsible for transport of raffinose into the cell. Can also transport lactose and melibiose. Has weak activity with maltose. The protein is Raffinose permease of Escherichia coli.